The sequence spans 278 residues: HTH-type transcriptional activator RhaS (278 aa).

In terms of domain architecture, HTH araC/xylS-type spans 174-272 (NLLLAWLEDH…NWSPRDIRQG (99 aa)). DNA-binding regions (H-T-H motif) lie at residues 191–212 (DAVADQFSLSLRTLHRQLKQQT) and 239–262 (VTDIAYRCGFSDSNHFSTLFRREF).

Binds DNA as a dimer.

It localises to the cytoplasm. Functionally, activates expression of the rhaBAD and rhaT operons. The chain is HTH-type transcriptional activator RhaS from Shigella sonnei (strain Ss046).